Consider the following 298-residue polypeptide: N-acetylmuramic acid 6-phosphate etherase (298 aa).

One can recognise an SIS domain in the interval 55–218; sequence AANRYKKGGR…STGVMIRQGK (164 aa). The active-site Proton donor is the glutamate 83. The active site involves glutamate 114.

This sequence belongs to the GCKR-like family. MurNAc-6-P etherase subfamily. Homodimer.

It carries out the reaction N-acetyl-D-muramate 6-phosphate + H2O = N-acetyl-D-glucosamine 6-phosphate + (R)-lactate. Its pathway is amino-sugar metabolism; N-acetylmuramate degradation. Functionally, specifically catalyzes the cleavage of the D-lactyl ether substituent of MurNAc 6-phosphate, producing GlcNAc 6-phosphate and D-lactate. The sequence is that of N-acetylmuramic acid 6-phosphate etherase from Lactobacillus acidophilus (strain ATCC 700396 / NCK56 / N2 / NCFM).